The chain runs to 356 residues: Phosphoserine aminotransferase (356 aa).

Arg-41 serves as a coordination point for L-glutamate. Pyridoxal 5'-phosphate contacts are provided by residues 76–77 (AS), Trp-102, Thr-150, Asp-169, and Gln-192. Position 193 is an N6-(pyridoxal phosphate)lysine (Lys-193). 234–235 (NT) is a binding site for pyridoxal 5'-phosphate.

This sequence belongs to the class-V pyridoxal-phosphate-dependent aminotransferase family. SerC subfamily. As to quaternary structure, homodimer. Pyridoxal 5'-phosphate serves as cofactor.

Its subcellular location is the cytoplasm. The enzyme catalyses O-phospho-L-serine + 2-oxoglutarate = 3-phosphooxypyruvate + L-glutamate. It catalyses the reaction 4-(phosphooxy)-L-threonine + 2-oxoglutarate = (R)-3-hydroxy-2-oxo-4-phosphooxybutanoate + L-glutamate. It functions in the pathway amino-acid biosynthesis; L-serine biosynthesis; L-serine from 3-phospho-D-glycerate: step 2/3. It participates in cofactor biosynthesis; pyridoxine 5'-phosphate biosynthesis; pyridoxine 5'-phosphate from D-erythrose 4-phosphate: step 3/5. Functionally, catalyzes the reversible conversion of 3-phosphohydroxypyruvate to phosphoserine and of 3-hydroxy-2-oxo-4-phosphonooxybutanoate to phosphohydroxythreonine. This is Phosphoserine aminotransferase from Flavobacterium johnsoniae (strain ATCC 17061 / DSM 2064 / JCM 8514 / BCRC 14874 / CCUG 350202 / NBRC 14942 / NCIMB 11054 / UW101) (Cytophaga johnsonae).